The following is a 261-amino-acid chain: Tryptophan synthase alpha chain (261 aa).

Catalysis depends on proton acceptor residues Glu49 and Asp60.

The protein belongs to the TrpA family. Tetramer of two alpha and two beta chains.

It carries out the reaction (1S,2R)-1-C-(indol-3-yl)glycerol 3-phosphate + L-serine = D-glyceraldehyde 3-phosphate + L-tryptophan + H2O. Its pathway is amino-acid biosynthesis; L-tryptophan biosynthesis; L-tryptophan from chorismate: step 5/5. In terms of biological role, the alpha subunit is responsible for the aldol cleavage of indoleglycerol phosphate to indole and glyceraldehyde 3-phosphate. The polypeptide is Tryptophan synthase alpha chain (Roseiflexus sp. (strain RS-1)).